A 438-amino-acid polypeptide reads, in one-letter code: Adenosylhomocysteinase (438 aa).

Substrate-binding residues include T64, D139, and E164. Residue 165-167 participates in NAD(+) binding; the sequence is TTT. Residues K194 and D198 each coordinate substrate. Residues N199, 228-233, E251, N286, 307-309, and N352 contribute to the NAD(+) site; these read GYGDVG and IGH.

Belongs to the adenosylhomocysteinase family. The cofactor is NAD(+).

The protein resides in the cytoplasm. It catalyses the reaction S-adenosyl-L-homocysteine + H2O = L-homocysteine + adenosine. The protein operates within amino-acid biosynthesis; L-homocysteine biosynthesis; L-homocysteine from S-adenosyl-L-homocysteine: step 1/1. In terms of biological role, may play a key role in the regulation of the intracellular concentration of adenosylhomocysteine. The chain is Adenosylhomocysteinase from Coxiella burnetii (strain RSA 493 / Nine Mile phase I).